Consider the following 518-residue polypeptide: ATP synthase subunit alpha (518 aa).

169–176 (GDRKTGKT) contacts ATP.

The protein belongs to the ATPase alpha/beta chains family. As to quaternary structure, F-type ATPases have 2 components, CF(1) - the catalytic core - and CF(0) - the membrane proton channel. CF(1) has five subunits: alpha(3), beta(3), gamma(1), delta(1), epsilon(1). CF(0) has three main subunits: a(1), b(2) and c(9-12). The alpha and beta chains form an alternating ring which encloses part of the gamma chain. CF(1) is attached to CF(0) by a central stalk formed by the gamma and epsilon chains, while a peripheral stalk is formed by the delta and b chains.

It localises to the cell membrane. The catalysed reaction is ATP + H2O + 4 H(+)(in) = ADP + phosphate + 5 H(+)(out). Produces ATP from ADP in the presence of a proton gradient across the membrane. The alpha chain is a regulatory subunit. The chain is ATP synthase subunit alpha from Enterococcus faecalis (strain ATCC 700802 / V583).